Consider the following 355-residue polypeptide: Probable butyrate kinase (355 aa).

Belongs to the acetokinase family.

The protein localises to the cytoplasm. The enzyme catalyses butanoate + ATP = butanoyl phosphate + ADP. The protein is Probable butyrate kinase of Listeria innocua serovar 6a (strain ATCC BAA-680 / CLIP 11262).